A 135-amino-acid chain; its full sequence is Aspartate 1-decarboxylase (135 aa).

Residue S25 is the Schiff-base intermediate with substrate; via pyruvic acid of the active site. S25 carries the post-translational modification Pyruvic acid (Ser). T57 serves as a coordination point for substrate. The active-site Proton donor is Y58. 73–75 (GAA) provides a ligand contact to substrate.

This sequence belongs to the PanD family. Heterooctamer of four alpha and four beta subunits. Pyruvate is required as a cofactor. In terms of processing, is synthesized initially as an inactive proenzyme, which is activated by self-cleavage at a specific serine bond to produce a beta-subunit with a hydroxyl group at its C-terminus and an alpha-subunit with a pyruvoyl group at its N-terminus.

It localises to the cytoplasm. It carries out the reaction L-aspartate + H(+) = beta-alanine + CO2. It functions in the pathway cofactor biosynthesis; (R)-pantothenate biosynthesis; beta-alanine from L-aspartate: step 1/1. Its function is as follows. Catalyzes the pyruvoyl-dependent decarboxylation of aspartate to produce beta-alanine. In Mycobacterium sp. (strain JLS), this protein is Aspartate 1-decarboxylase.